Consider the following 344-residue polypeptide: Arginine N-succinyltransferase (344 aa).

Leu125 lines the succinyl-CoA pocket. His229 (proton donor) is an active-site residue.

Belongs to the arginine N-succinyltransferase family.

It catalyses the reaction succinyl-CoA + L-arginine = N(2)-succinyl-L-arginine + CoA + H(+). It functions in the pathway amino-acid degradation; L-arginine degradation via AST pathway; L-glutamate and succinate from L-arginine: step 1/5. In terms of biological role, catalyzes the transfer of succinyl-CoA to arginine to produce N(2)-succinylarginine. The polypeptide is Arginine N-succinyltransferase (Salmonella dublin (strain CT_02021853)).